Here is a 126-residue protein sequence, read N- to C-terminus: Glycine cleavage system H protein (126 aa).

One can recognise a Lipoyl-binding domain in the interval 22 to 104 (TVTIGITEYA…YEKAWMVKVE (83 aa)). K63 is subject to N6-lipoyllysine.

The protein belongs to the GcvH family. As to quaternary structure, the glycine cleavage system is composed of four proteins: P, T, L and H. Requires (R)-lipoate as cofactor.

The glycine cleavage system catalyzes the degradation of glycine. The H protein shuttles the methylamine group of glycine from the P protein to the T protein. Functionally, is also involved in protein lipoylation via its role as an octanoyl/lipoyl carrier protein intermediate. The protein is Glycine cleavage system H protein of Staphylococcus saprophyticus subsp. saprophyticus (strain ATCC 15305 / DSM 20229 / NCIMB 8711 / NCTC 7292 / S-41).